The following is a 286-amino-acid chain: uncharacterized protein (286 aa).

Positions 1 to 31 (MKKMSRRQFLKGMFGALAAGALTAGGGYGYA) form a signal peptide, tat-type signal. Asp-65, His-67, Asp-97, Asn-130, His-221, and His-223 together coordinate a divalent metal cation.

It belongs to the metallophosphoesterase superfamily. A divalent metal cation is required as a cofactor. Predicted to be exported by the Tat system. The position of the signal peptide cleavage has not been experimentally proven.

This is an uncharacterized protein from Bacillus subtilis (strain 168).